Consider the following 166-residue polypeptide: Probable chemoreceptor glutamine deamidase CheD (166 aa).

It belongs to the CheD family.

The catalysed reaction is L-glutaminyl-[protein] + H2O = L-glutamyl-[protein] + NH4(+). In terms of biological role, probably deamidates glutamine residues to glutamate on methyl-accepting chemotaxis receptors (MCPs), playing an important role in chemotaxis. In Oceanobacillus iheyensis (strain DSM 14371 / CIP 107618 / JCM 11309 / KCTC 3954 / HTE831), this protein is Probable chemoreceptor glutamine deamidase CheD.